The sequence spans 506 residues: Exopolysaccharide phosphotransferase NFA_48680 (506 aa).

The interval proline 484 to alanine 506 is disordered.

Belongs to the stealth family.

This chain is Exopolysaccharide phosphotransferase NFA_48680, found in Nocardia farcinica (strain IFM 10152).